The following is a 341-amino-acid chain: Ribulose-5-phosphate reductase 2 (341 aa).

4 residues coordinate Zn(2+): C38, H64, E65, and E144.

Belongs to the zinc-containing alcohol dehydrogenase family. As to quaternary structure, heterodimer together with TarI. The cofactor is Zn(2+).

It carries out the reaction D-ribitol 5-phosphate + NADP(+) = D-ribulose 5-phosphate + NADPH + H(+). The protein operates within cell wall biogenesis; poly(ribitol phosphate) teichoic acid biosynthesis. Catalyzes the NADPH dependent reduction of D-ribulose 5-phosphate to D-ribitol 5-phosphate. The protein is Ribulose-5-phosphate reductase 2 of Staphylococcus aureus (strain NCTC 8325 / PS 47).